The following is a 620-amino-acid chain: Chaperone protein HscA homolog (620 aa).

Belongs to the heat shock protein 70 family.

Chaperone involved in the maturation of iron-sulfur cluster-containing proteins. Has a low intrinsic ATPase activity which is markedly stimulated by HscB. This chain is Chaperone protein HscA homolog, found in Shewanella oneidensis (strain ATCC 700550 / JCM 31522 / CIP 106686 / LMG 19005 / NCIMB 14063 / MR-1).